Consider the following 298-residue polypeptide: Arginine/serine-rich protein 1 (298 aa).

The interval 1–135 (MSSAAMSKYV…SRSRSRGRSQ (135 aa)) is disordered. S17 is subject to Phosphoserine. Residues 23–36 (SPSTSGSGRSSRLS) show a composition bias toward low complexity. Residues 60-105 (SRSHSRPRRSRRSRSRSRRRHQRKYRRYSRSYSRSRSRSRSHRYHR) show a composition bias toward basic residues. Phosphoserine occurs at positions 118 and 120. Residues 124-135 (SRSRSRSRGRSQ) are compositionally biased toward basic residues. Position 145 is an omega-N-methylarginine (R145). Disordered regions lie at residues 161 to 181 (RPRWRERSRTRSRSRSRTPFR) and 218 to 298 (ASQG…WIPV). A compositionally biased stretch (polar residues) spans 219–228 (SQGTAVSSSG). Residues 230 to 246 (KVEHSEKQTEDATKNTS) show a composition bias toward basic and acidic residues. Over residues 247 to 271 (EKSSTQRNIAFSSNNSVAKPLQKTT) the composition is skewed to polar residues. Residues 274–289 (AVEEKSSGSPKIDKKK) are compositionally biased toward basic and acidic residues. At S282 the chain carries Phosphoserine.

This sequence belongs to the RSRP family. Post-translationally, phosphorylated. Phosphorylation at Ser-118 and Ser-120 mediates the interaction with spliceosome proteins.

It is found in the nucleus. In terms of biological role, probably acts as a spliceosomal factor that contributes to spliceosome assembly and regulates the isoform switching of proteins such as PARP6. This Mus musculus (Mouse) protein is Arginine/serine-rich protein 1 (Rsrp1).